A 293-amino-acid polypeptide reads, in one-letter code: MGSQLVPPPSAFNYIESQRDEFQLSHDLTEIVLQFPSTASQITARLSRSCMKIDHCVIEYRQQVPINASGTVIVEIHDKRMTDNESLQASWTFPIRCNIDLHYFSSSFFSLKDPIPWKLYYRVSDSNVHQMTHFAKFKGKLKLSSAKHSVDIPFRAPTVKILAKQFSEKDIDFWHVGYGKWERRLVKSASSSRFGLRGPIEINPGESWATKSAIGPTNRNADLDIEEELLPYRELNRLGTNILDPGESASIVGIQRSQSNITMSMSQLNELVRSTVHECIKTSCIPSTPKSLS.

Belongs to the begomovirus movement protein BC1 family. In terms of assembly, binds to dimeric supercoiled plasmid DNA. Post-translationally, phosphorylated.

The protein localises to the host cell membrane. The protein resides in the host microsome membrane. It localises to the host endoplasmic reticulum membrane. Its function is as follows. Transports viral genome to neighboring plant cells directly through plasmosdesmata, without any budding. The movement protein allows efficient cell to cell propagation, by bypassing the host cell wall barrier. Begomovirus genome is shuttled out of nucleus by Nuclear shuttle protein (NSP) and the movement protein transports the DNA-NSP complex to cell plasmodesmata and facilitates further movement across the cell wall. The sequence is that of Movement protein BC1 from Cucurbita moschata (Winter crookneck squash).